The primary structure comprises 198 residues: Probable septum site-determining protein MinC (198 aa).

Belongs to the MinC family. In terms of assembly, interacts with MinD and FtsZ.

Functionally, cell division inhibitor that blocks the formation of polar Z ring septums. Rapidly oscillates between the poles of the cell to destabilize FtsZ filaments that have formed before they mature into polar Z rings. Prevents FtsZ polymerization. The protein is Probable septum site-determining protein MinC of Thermosipho melanesiensis (strain DSM 12029 / CIP 104789 / BI429).